The primary structure comprises 130 residues: Insulin-like growth factor 1 (130 aa).

A signal peptide spans 1–25 (MHAVSSSHLFYLAFCLLVLTSSATA). The tract at residues 26 to 54 (GPETLCGAELVDALQFVCGDRGFYFNKPT) is b. Disulfide bonds link Cys31-Cys73, Cys43-Cys86, and Cys72-Cys77. A c region spans residues 55–66 (GYGSSSRRAPQT). Residues 67 to 87 (GIVDECCFRSCDLRRLEMYCA) form an a region. The segment at 88–95 (PLKPAKSA) is d. The propeptide at 96-130 (RSVRAQRHTDMPKTQKEVHLKNASRGSAGNKNYRM) is e peptide. The disordered stretch occupies residues 97 to 130 (SVRAQRHTDMPKTQKEVHLKNASRGSAGNKNYRM). Residues 102–115 (RHTDMPKTQKEVHL) show a composition bias toward basic and acidic residues. The span at 119–130 (SRGSAGNKNYRM) shows a compositional bias: polar residues.

It belongs to the insulin family. As to quaternary structure, forms a ternary complex with IGFR1 and ITGAV:ITGB3. Forms a ternary complex with IGFR1 and ITGA6:ITGB4. Forms a ternary complex with IGFBP3 and ALS.

Its subcellular location is the secreted. Functionally, the insulin-like growth factors, isolated from plasma, are structurally and functionally related to insulin but have a much higher growth-promoting activity. May be a physiological regulator of [1-14C]-2-deoxy-D-glucose (2DG) transport and glycogen synthesis in osteoblasts. Stimulates glucose transport in bone-derived osteoblastic (PyMS) cells and is effective at much lower concentrations than insulin, not only regarding glycogen and DNA synthesis but also with regard to enhancing glucose uptake. May play a role in synapse maturation. Ca(2+)-dependent exocytosis of IGF1 is required for sensory perception of smell in the olfactory bulb. Acts as a ligand for IGF1R. Binds to the alpha subunit of IGF1R, leading to the activation of the intrinsic tyrosine kinase activity which autophosphorylates tyrosine residues in the beta subunit thus initiating a cascade of down-stream signaling events leading to activation of the PI3K-AKT/PKB and the Ras-MAPK pathways. Binds to integrins ITGAV:ITGB3 and ITGA6:ITGB4. Its binding to integrins and subsequent ternary complex formation with integrins and IGFR1 are essential for IGF1 signaling. Induces the phosphorylation and activation of IGFR1, MAPK3/ERK1, MAPK1/ERK2 and AKT1. As part of the MAPK/ERK signaling pathway, acts as a negative regulator of apoptosis in cardiomyocytes via promotion of STUB1/CHIP-mediated ubiquitination and degradation of ICER-type isoforms of CREM. In Cavia porcellus (Guinea pig), this protein is Insulin-like growth factor 1.